The primary structure comprises 226 residues: Ribosomal RNA large subunit methyltransferase E (226 aa).

Residues G82, W84, D100, D116, and D140 each coordinate S-adenosyl-L-methionine. Residue K180 is the Proton acceptor of the active site.

This sequence belongs to the class I-like SAM-binding methyltransferase superfamily. RNA methyltransferase RlmE family.

The protein resides in the cytoplasm. It carries out the reaction uridine(2552) in 23S rRNA + S-adenosyl-L-methionine = 2'-O-methyluridine(2552) in 23S rRNA + S-adenosyl-L-homocysteine + H(+). Specifically methylates the uridine in position 2552 of 23S rRNA at the 2'-O position of the ribose in the fully assembled 50S ribosomal subunit. This is Ribosomal RNA large subunit methyltransferase E from Caulobacter sp. (strain K31).